A 408-amino-acid chain; its full sequence is GTPase HflX (408 aa).

The Hflx-type G domain occupies 198 to 361 (PRVSLVGYTN…LIVREMERHY (164 aa)). GTP is bound by residues 204 to 211 (GYTNAGKS), 229 to 233 (FVTLD), 251 to 254 (DTVG), 317 to 320 (NKAD), and 339 to 341 (SAK). Residues Ser211 and Thr231 each contribute to the Mg(2+) site.

This sequence belongs to the TRAFAC class OBG-HflX-like GTPase superfamily. HflX GTPase family. Monomer. Associates with the 50S ribosomal subunit. The cofactor is Mg(2+).

The protein localises to the cytoplasm. Functionally, GTPase that associates with the 50S ribosomal subunit and may have a role during protein synthesis or ribosome biogenesis. This is GTPase HflX from Spirochaeta thermophila (strain ATCC 49972 / DSM 6192 / RI 19.B1).